Here is a 414-residue protein sequence, read N- to C-terminus: Gamma-glutamyl phosphate reductase (414 aa).

This sequence belongs to the gamma-glutamyl phosphate reductase family.

It localises to the cytoplasm. The enzyme catalyses L-glutamate 5-semialdehyde + phosphate + NADP(+) = L-glutamyl 5-phosphate + NADPH + H(+). It participates in amino-acid biosynthesis; L-proline biosynthesis; L-glutamate 5-semialdehyde from L-glutamate: step 2/2. In terms of biological role, catalyzes the NADPH-dependent reduction of L-glutamate 5-phosphate into L-glutamate 5-semialdehyde and phosphate. The product spontaneously undergoes cyclization to form 1-pyrroline-5-carboxylate. In Clostridium botulinum (strain Eklund 17B / Type B), this protein is Gamma-glutamyl phosphate reductase.